Consider the following 185-residue polypeptide: V-type ATP synthase subunit E (185 aa).

This sequence belongs to the V-ATPase E subunit family.

Its function is as follows. Produces ATP from ADP in the presence of a proton gradient across the membrane. The polypeptide is V-type ATP synthase subunit E (Deinococcus radiodurans (strain ATCC 13939 / DSM 20539 / JCM 16871 / CCUG 27074 / LMG 4051 / NBRC 15346 / NCIMB 9279 / VKM B-1422 / R1)).